Here is a 471-residue protein sequence, read N- to C-terminus: Reticulon-2 (471 aa).

Disordered stretches follow at residues 1 to 137 (MGQV…ERPL), 153 to 181 (SAGS…ASEA), and 205 to 234 (QLSP…DDEP). Low complexity predominate over residues 14–25 (APSTASSTPDST). The segment covering 32-43 (SDFRELHTAREF) has biased composition (basic and acidic residues). A Phosphoserine modification is found at Ser-44. Polar residues-rich tracts occupy residues 100 to 118 (PQQS…LSQS) and 159 to 168 (DSATSSSTPL). The span at 169 to 181 (ENEEPDGLEASEA) shows a compositional bias: acidic residues. Positions 205–229 (QLSPSSGTPQAHTPSPQRSQDSNSG) are enriched in polar residues. Phosphoserine occurs at positions 226 and 228. One can recognise a Reticulon domain in the interval 272–471 (VADLLYWKDT…SVSGSKAKAE (200 aa)). The next 2 membrane-spanning stretches (helical) occupy residues 295-315 (LLCL…LLGL) and 390-410 (LLFY…LVIL).

Interacts with SPAST. Interacts with BACE1. Interacts (via first transmembrane domain) with ARL6IP5/GTRAP3-18. Interacts (via N-terminus) with SLC1A1/EAAC1; the interaction promotes cell surface expression of SLC1A1. In terms of tissue distribution, detected in skeletal and cardiac muscle (at protein level). Expressed predominantly in neural and muscular tissues.

Its subcellular location is the endoplasmic reticulum membrane. The protein localises to the sarcoplasmic reticulum membrane. It localises to the cell membrane. It is found in the sarcolemma. The protein resides in the T-tubule. Its subcellular location is the cytoplasm. The protein localises to the myofibril. It localises to the sarcomere. It is found in the z line. The protein resides in the cytoskeleton. Its function is as follows. Inhibits amyloid precursor protein processing, probably by blocking BACE1 activity. Enhances trafficking of the glutamate transporter SLC1A1/EAAC1 from the endoplasmic reticulum to the cell surface. Plays a role in the translocation of SLC2A4/GLUT4 from intracellular membranes to the cell membrane which facilitates the uptake of glucose into the cell. In Mus musculus (Mouse), this protein is Reticulon-2.